Reading from the N-terminus, the 377-residue chain is Flap endonuclease 1 (377 aa).

Positions M1–R105 are N-domain. D34 contacts Mg(2+). DNA-binding residues include R47 and R71. Mg(2+) is bound at residue D87. The segment at S99 to A119 is disordered. The segment at E120–Y251 is I-domain. E156, E158, D177, and D179 together coordinate Mg(2+). A DNA-binding site is contributed by E156. Residues G229 and D231 each contribute to the DNA site. D231 is a binding site for Mg(2+). Positions V338–F346 are interaction with PCNA.

The protein belongs to the XPG/RAD2 endonuclease family. FEN1 subfamily. In terms of assembly, interacts with PCNA. Three molecules of FEN1 bind to one PCNA trimer with each molecule binding to one PCNA monomer. PCNA stimulates the nuclease activity without altering cleavage specificity. The cofactor is Mg(2+). In terms of processing, phosphorylated. Phosphorylation upon DNA damage induces relocalization to the nuclear plasma.

Its subcellular location is the nucleus. It localises to the nucleolus. It is found in the nucleoplasm. The protein localises to the mitochondrion. Functionally, structure-specific nuclease with 5'-flap endonuclease and 5'-3' exonuclease activities involved in DNA replication and repair. During DNA replication, cleaves the 5'-overhanging flap structure that is generated by displacement synthesis when DNA polymerase encounters the 5'-end of a downstream Okazaki fragment. It enters the flap from the 5'-end and then tracks to cleave the flap base, leaving a nick for ligation. Also involved in the long patch base excision repair (LP-BER) pathway, by cleaving within the apurinic/apyrimidinic (AP) site-terminated flap. Acts as a genome stabilization factor that prevents flaps from equilibrating into structures that lead to duplications and deletions. Also possesses 5'-3' exonuclease activity on nicked or gapped double-stranded DNA, and exhibits RNase H activity. Also involved in replication and repair of rDNA and in repairing mitochondrial DNA. The polypeptide is Flap endonuclease 1 (Vanderwaltozyma polyspora (strain ATCC 22028 / DSM 70294 / BCRC 21397 / CBS 2163 / NBRC 10782 / NRRL Y-8283 / UCD 57-17) (Kluyveromyces polysporus)).